Reading from the N-terminus, the 940-residue chain is MRDKIVVKGAKVHNLKNVDLQIPRDKFVVFTGLSGSGKSSLAFDTLYAEGQRRYVESLSAYARQFLGQMDKPDVEYIEGLSPAISIDQKTTSKNPRSTVGTVTEIYDYLRLLYARVGKPHCPKCGKEIQQQTVDQMIDKILELPERTRIQVLAPIIKGRKGEHIKVIENIIKGGYVRARIDGEIIDLQEESVKLEKNKKHTIEAVIDRIIIKSDIRSRLADSIEIALKLSEGVVIINVIDKEDILFSENFACIDCGISIDEISPRLFSFNSPFGKCDYCDGLGTLLEIDEKLVIPNKSKSILEGGILPWANTVTNEDSWTFSILKALSKKYNFSLNTPIGELDEEIYNMLLYGIKGERIKVRYKKDGRAVDFNHTFEGLMNTLKRRYMETNSNYMKDNIENYMSDNFCPKCKGARLKPEALAVTLGEKNIFEFCKMSIREELRFLSELMLSNKNKIISNQILKEIESRLQFLIDVGLDYLDLARMAGTLSGGEAQRIRLATQIGSSLVGVLYILDEPSIGLHQRDNDRLIATLKRLRDLGNTLIVVEHDEDTMRAADYIVDIGPGAGEHGGEIVAAGDLKTVMETEGSLTGQYLVGKKKIDIPINRRKSNGKSIIVKEAKENNLKNVDVEFPLGTFTCITGVSGSGKSTLINEILYKGLNKKLNNSKEHPGLHKEILGIENIDKIINIDQSPIGRTPRSNPATYTGVFDGIREVFSNTTESKMRGYKPGRFSFNVKGGRCEACKGDGIIKIEMQFLSDVYVPCEICKGKRYNRETLEVKYKNKNISEILDMTVEESVDFFKNIPKIKNKLQTLMDVGLGYVRLGQPSTQLSGGEAQRIKLASELSKRSTGKTLYILDEPTTGLHIDDVNRLISIIQRLVDGGNTAIIIEHNLDVIKSADYIIDLGPEGGAKGGEVIGIGTPEEISVNIDSYTGHYLKKML.

Gly32–Ser39 serves as a coordination point for ATP. The C4-type zinc-finger motif lies at Cys252–Cys279. 2 ABC transporter domains span residues Trp309–Leu589 and Ser609–Lys937. Gly641–Ser648 contacts ATP. The segment at Cys740–Cys766 adopts a C4-type zinc-finger fold.

The protein belongs to the ABC transporter superfamily. UvrA family. As to quaternary structure, forms a heterotetramer with UvrB during the search for lesions.

It localises to the cytoplasm. In terms of biological role, the UvrABC repair system catalyzes the recognition and processing of DNA lesions. UvrA is an ATPase and a DNA-binding protein. A damage recognition complex composed of 2 UvrA and 2 UvrB subunits scans DNA for abnormalities. When the presence of a lesion has been verified by UvrB, the UvrA molecules dissociate. This Clostridium tetani (strain Massachusetts / E88) protein is UvrABC system protein A.